The following is a 398-amino-acid chain: tRNA(Ile)-lysidine synthase (398 aa).

25–30 contacts ATP; the sequence is SGGVDS.

This sequence belongs to the tRNA(Ile)-lysidine synthase family.

Its subcellular location is the cytoplasm. It catalyses the reaction cytidine(34) in tRNA(Ile2) + L-lysine + ATP = lysidine(34) in tRNA(Ile2) + AMP + diphosphate + H(+). In terms of biological role, ligates lysine onto the cytidine present at position 34 of the AUA codon-specific tRNA(Ile) that contains the anticodon CAU, in an ATP-dependent manner. Cytidine is converted to lysidine, thus changing the amino acid specificity of the tRNA from methionine to isoleucine. In Francisella tularensis subsp. tularensis (strain SCHU S4 / Schu 4), this protein is tRNA(Ile)-lysidine synthase.